A 494-amino-acid chain; its full sequence is Guanosine-5'-triphosphate,3'-diphosphate pyrophosphatase (494 aa).

The protein belongs to the GppA/Ppx family. GppA subfamily.

It catalyses the reaction guanosine 3'-diphosphate 5'-triphosphate + H2O = guanosine 3',5'-bis(diphosphate) + phosphate + H(+). It participates in purine metabolism; ppGpp biosynthesis; ppGpp from GTP: step 2/2. In terms of biological role, catalyzes the conversion of pppGpp to ppGpp. Guanosine pentaphosphate (pppGpp) is a cytoplasmic signaling molecule which together with ppGpp controls the 'stringent response', an adaptive process that allows bacteria to respond to amino acid starvation, resulting in the coordinated regulation of numerous cellular activities. This chain is Guanosine-5'-triphosphate,3'-diphosphate pyrophosphatase, found in Shigella flexneri.